The sequence spans 818 residues: Phenylalanine--tRNA ligase beta subunit (818 aa).

A tRNA-binding domain is found at 39 to 148; the sequence is AAELQKFEVA…EDAVVGENFT (110 aa). Residues 423 to 498 form the B5 domain; that stretch reads PQKKPLDFSA…RIYGYDKIES (76 aa). Residues Asp-476, Asp-482, Glu-485, and Glu-486 each contribute to the Mg(2+) site. Positions 724 to 817 constitute an FDX-ACB domain; the sequence is SDFQANFRDY…IEQKFQGTLR (94 aa).

The protein belongs to the phenylalanyl-tRNA synthetase beta subunit family. Type 1 subfamily. As to quaternary structure, tetramer of two alpha and two beta subunits. It depends on Mg(2+) as a cofactor.

The protein localises to the cytoplasm. The enzyme catalyses tRNA(Phe) + L-phenylalanine + ATP = L-phenylalanyl-tRNA(Phe) + AMP + diphosphate + H(+). The protein is Phenylalanine--tRNA ligase beta subunit of Rickettsia felis (strain ATCC VR-1525 / URRWXCal2) (Rickettsia azadi).